The sequence spans 200 residues: Holliday junction branch migration complex subunit RuvA (200 aa).

The segment at 1–63 (MIAFVRGQVA…EDSLTLFGFA (63 aa)) is domain I. Residues 64-142 (DEDEKQTFEL…APTGAGRSAG (79 aa)) are domain II. Residues 142-146 (GVPAP) form a flexible linker region. The segment at 147–200 (AGAVWRDQVHQGLVGLGWPVRDAEKAVAAVAPEAGDVPDVAALLRAALRTLSKA) is domain III.

Belongs to the RuvA family. As to quaternary structure, homotetramer. Forms an RuvA(8)-RuvB(12)-Holliday junction (HJ) complex. HJ DNA is sandwiched between 2 RuvA tetramers; dsDNA enters through RuvA and exits via RuvB. An RuvB hexamer assembles on each DNA strand where it exits the tetramer. Each RuvB hexamer is contacted by two RuvA subunits (via domain III) on 2 adjacent RuvB subunits; this complex drives branch migration. In the full resolvosome a probable DNA-RuvA(4)-RuvB(12)-RuvC(2) complex forms which resolves the HJ.

The protein localises to the cytoplasm. The RuvA-RuvB-RuvC complex processes Holliday junction (HJ) DNA during genetic recombination and DNA repair, while the RuvA-RuvB complex plays an important role in the rescue of blocked DNA replication forks via replication fork reversal (RFR). RuvA specifically binds to HJ cruciform DNA, conferring on it an open structure. The RuvB hexamer acts as an ATP-dependent pump, pulling dsDNA into and through the RuvAB complex. HJ branch migration allows RuvC to scan DNA until it finds its consensus sequence, where it cleaves and resolves the cruciform DNA. In Nocardioides sp. (strain ATCC BAA-499 / JS614), this protein is Holliday junction branch migration complex subunit RuvA.